A 174-amino-acid polypeptide reads, in one-letter code: MSINWVTYKEGSESDILLLENECMFDCFDGVAISILCKPPSLKSWTCTKGLLCLTNQRLVYIAKDTDCDFKDFQSPVANLKDTKLNQPFFGANYYSGTVMPVPNGGIPCEAEVKLQFNEGGIFNFVEAWNRLIQRFQEVDSVSRVQHLDPLPPYHRPSSSQDQPPHYEEAVNKS.

A disordered region spans residues 147-174 (HLDPLPPYHRPSSSQDQPPHYEEAVNKS). Over residues 165-174 (PHYEEAVNKS) the composition is skewed to basic and acidic residues.

This sequence belongs to the UPF0664 family.

It localises to the cytoplasm. The protein localises to the nucleus. This is UPF0664 stress-induced protein C29B12.11c from Schizosaccharomyces pombe (strain 972 / ATCC 24843) (Fission yeast).